Here is a 445-residue protein sequence, read N- to C-terminus: Phosphoglucosamine mutase (445 aa).

The active-site Phosphoserine intermediate is the Ser102. Positions 102, 241, 243, and 245 each coordinate Mg(2+). Position 102 is a phosphoserine (Ser102).

Belongs to the phosphohexose mutase family. The cofactor is Mg(2+). Activated by phosphorylation.

It catalyses the reaction alpha-D-glucosamine 1-phosphate = D-glucosamine 6-phosphate. Functionally, catalyzes the conversion of glucosamine-6-phosphate to glucosamine-1-phosphate. This Escherichia fergusonii (strain ATCC 35469 / DSM 13698 / CCUG 18766 / IAM 14443 / JCM 21226 / LMG 7866 / NBRC 102419 / NCTC 12128 / CDC 0568-73) protein is Phosphoglucosamine mutase.